Reading from the N-terminus, the 167-residue chain is Small ribosomal subunit protein uS5 (167 aa).

In terms of domain architecture, S5 DRBM spans 12 to 75 (LQEKLIAVNR…EKARRSMVTI (64 aa)).

This sequence belongs to the universal ribosomal protein uS5 family. In terms of assembly, part of the 30S ribosomal subunit. Contacts proteins S4 and S8.

With S4 and S12 plays an important role in translational accuracy. In terms of biological role, located at the back of the 30S subunit body where it stabilizes the conformation of the head with respect to the body. The polypeptide is Small ribosomal subunit protein uS5 (Vibrio cholerae serotype O1 (strain ATCC 39541 / Classical Ogawa 395 / O395)).